Reading from the N-terminus, the 297-residue chain is Glycosylphosphatidylinositol anchor biosynthesis protein 11 (297 aa).

Residues Met-1 to Ala-18 are compositionally biased toward low complexity. The tract at residues Met-1 to Lys-26 is disordered. 2 helical membrane passes run Ser-44–Ala-64 and Phe-76–Leu-96. The disordered stretch occupies residues Pro-97–Gln-140. Over residues Gly-107–Lys-126 the composition is skewed to basic and acidic residues. A compositionally biased stretch (basic residues) spans Leu-127–Gln-140. Asn-139 is a glycosylation site (N-linked (GlcNAc...) asparagine). 4 helical membrane-spanning segments follow: residues Leu-157–Ala-177, Val-187–Val-207, Val-225–Leu-245, and Ala-253–Cys-273.

The protein belongs to the PIGF family.

It localises to the endoplasmic reticulum membrane. It participates in glycolipid biosynthesis; glycosylphosphatidylinositol-anchor biosynthesis. Acts in the GPI biosynthetic pathway between GlcNAc-PI synthesis and GPI transfer to protein. The polypeptide is Glycosylphosphatidylinositol anchor biosynthesis protein 11 (gpi11) (Aspergillus fumigatus (strain ATCC MYA-4609 / CBS 101355 / FGSC A1100 / Af293) (Neosartorya fumigata)).